A 199-amino-acid polypeptide reads, in one-letter code: Thymidine kinase (199 aa).

ATP-binding positions include 23 to 30 (GSMFSGKT) and 95 to 98 (DEAQ). E96 acts as the Proton acceptor in catalysis. Residues C152, C155, C184, and C187 each coordinate Zn(2+).

Belongs to the thymidine kinase family. In terms of assembly, homotetramer.

The protein resides in the cytoplasm. The enzyme catalyses thymidine + ATP = dTMP + ADP + H(+). The protein is Thymidine kinase of Bacteroides fragilis (strain YCH46).